The sequence spans 1153 residues: Error-prone DNA polymerase (1153 aa).

Disordered stretches follow at residues 1-39 (MFYS…QAQP) and 64-89 (VGEG…GASQ).

Belongs to the DNA polymerase type-C family. DnaE2 subfamily.

The protein localises to the cytoplasm. It carries out the reaction DNA(n) + a 2'-deoxyribonucleoside 5'-triphosphate = DNA(n+1) + diphosphate. Functionally, DNA polymerase involved in damage-induced mutagenesis and translesion synthesis (TLS). It is not the major replicative DNA polymerase. The sequence is that of Error-prone DNA polymerase from Corynebacterium jeikeium (strain K411).